We begin with the raw amino-acid sequence, 127 residues long: Modulator protein MzrA (127 aa).

Residues 1–10 (MQIPRMSLRQ) lie on the Cytoplasmic side of the membrane. Residues 11 to 31 (LAWSGAVLLLVGTLLLAWSAV) form a helical membrane-spanning segment. Residues 32-127 (RQQESTLAIR…RLRDNSHRFG (96 aa)) lie on the Periplasmic side of the membrane.

It belongs to the MzrA family. Interacts with EnvZ.

It localises to the cell inner membrane. Modulates the activity of the EnvZ/OmpR two-component regulatory system, probably by directly modulating EnvZ enzymatic activity and increasing stability of phosphorylated OmpR. Links the two-component systems CpxA/CpxR and EnvZ/OmpR. This is Modulator protein MzrA from Escherichia coli (strain K12).